Reading from the N-terminus, the 465-residue chain is FAD-dependent monooxygenase penM (465 aa).

A helical membrane pass occupies residues Q5 to H25. Positions 35, 49, 108, 299, and 312 each coordinate FAD. A helical membrane pass occupies residues V435–M455.

Belongs to the paxM FAD-dependent monooxygenase family. It depends on FAD as a cofactor.

Its subcellular location is the membrane. It participates in secondary metabolite biosynthesis. Its function is as follows. FAD-dependent monooxygenase; part of the gene cluster that mediates the biosynthesis of the indole diterpenes penitrems. The geranylgeranyl diphosphate (GGPP) synthase penG catalyzes the first step in penitrem biosynthesis via conversion of farnesyl pyrophosphate and isopentyl pyrophosphate into geranylgeranyl pyrophosphate (GGPP). Condensation of indole-3-glycerol phosphate with GGPP by the prenyl transferase penC then forms 3-geranylgeranylindole (3-GGI). Epoxidation by the FAD-dependent monooxygenase penM leads to a epoxidized-GGI that is substrate of the terpene cyclase penB for cyclization to yield paspaline. Paspaline is subsequently converted to 13-desoxypaxilline by the cytochrome P450 monooxygenase penP, the latter being then converted to paxilline by the cytochrome P450 monooxygenase penQ. Paxilline is converted to beta-paxitriol via C-10 ketoreduction by the short-chain dehydrogenase PC-15 which can be monoprenylated at the C-20 by the indole diterpene prenyltransferase penD. A two-step elimination (acetylation and elimination) process performed by the O-acetyltransferase PC-16 and the P.simplicissimum ptmI-ortholog not yet identified in P.crustosum, leads to the production of the prenylated form of penijanthine. The FAD-linked oxidoreductase ptmO then converts the prenylated form of penijanthine into PC-M5 which is in turn transformed into PC-M4 by the aromatic dimethylallyltransferase PC-22. A series of oxidation steps involving 4 cytochrome P450 monooxygenases (PC-21, PC-05, PC-23, PC-20) and a FAD-dependent monooxygenase (PC-14) are required for the transformation of PC-M4 to penitrems A and E. Synthesis of these final products is proposed to proceed via penitrems D and C (PC-21, PC-05, PC-14) and penitrems B and F (PC-21, PC-05, PC-14, PC-23). In Penicillium crustosum (Blue mold fungus), this protein is FAD-dependent monooxygenase penM.